A 258-amino-acid chain; its full sequence is 5'-nucleotidase SurE (258 aa).

A divalent metal cation contacts are provided by Asp9, Asp10, Ser42, and Asn95.

The protein belongs to the SurE nucleotidase family. The cofactor is a divalent metal cation.

Its subcellular location is the cytoplasm. The enzyme catalyses a ribonucleoside 5'-phosphate + H2O = a ribonucleoside + phosphate. In terms of biological role, nucleotidase that shows phosphatase activity on nucleoside 5'-monophosphates. The chain is 5'-nucleotidase SurE from Campylobacter concisus (strain 13826).